The sequence spans 200 residues: Holliday junction resolvase RecU (200 aa).

The interval 1 to 25 (MTIRYPNGKRYNQASQPHKTPIKKH) is disordered. 4 residues coordinate Mg(2+): T85, D87, E100, and Q119.

Belongs to the RecU family. Requires Mg(2+) as cofactor.

It is found in the cytoplasm. It catalyses the reaction Endonucleolytic cleavage at a junction such as a reciprocal single-stranded crossover between two homologous DNA duplexes (Holliday junction).. In terms of biological role, endonuclease that resolves Holliday junction intermediates in genetic recombination. Cleaves mobile four-strand junctions by introducing symmetrical nicks in paired strands. Promotes annealing of linear ssDNA with homologous dsDNA. Required for DNA repair, homologous recombination and chromosome segregation. This Bacillus cereus (strain ZK / E33L) protein is Holliday junction resolvase RecU.